We begin with the raw amino-acid sequence, 309 residues long: SERTA domain-containing protein 2 (309 aa).

3 disordered regions span residues Met-1–Arg-30, Glu-79–Gly-114, and Pro-175–Leu-220. Over residues Arg-8 to Glu-18 the composition is skewed to basic and acidic residues. Positions Tyr-33–Gly-80 constitute an SERTA domain. 2 stretches are compositionally biased toward low complexity: residues Ser-89–Ser-99 and Pro-175–Glu-189. The segment covering Glu-204 to Phe-216 has biased composition (basic and acidic residues). The interval Thr-230–Leu-306 is required for transactivation activity. The Nuclear export signal (NES) motif lies at Leu-233–Leu-238.

Interacts with XPO1; which mediates nuclear export. Interacts with TFDP1; modulates transactivation activity of TFDP1/E2F complexes. Polyubiquitinated, which promotes proteasomal degradation. As to expression, expressed in white and brown adipose tissue.

The protein localises to the nucleus. Its subcellular location is the cytoplasm. Functionally, acts at E2F-responsive promoters as coregulator to integrate signals provided by PHD- and/or bromodomain-containing transcription factors. May act as coactivator as well as corepressor of E2F1-TFDP1 and E2F4-TFDP1 complexes on E2F consensus binding sites, which would activate or inhibit E2F-target genes expression. Modulates fat storage by down-regulating the expression of key genes involved in adipocyte lipolysis, thermogenesis and oxidative metabolism. In Mus musculus (Mouse), this protein is SERTA domain-containing protein 2 (Sertad2).